We begin with the raw amino-acid sequence, 175 residues long: MADEELQPVPAAEAAIVPSGPTSQWLTENGFAHESLAADKNGVEIIKVEADFLLPIATALYAYGFNYLQFQGGVDLGPGQDLVSVYHLVKVSDNADKPEEIRVKVFLPRENPVVPSVYWIWKTADWQERESYDMFGIIYEGHPNLKRILMPEDWVGWPLRKDYISPDFYELQDAY.

This sequence belongs to the complex I 30 kDa subunit family. NDH-1 can be composed of about 15 different subunits; different subcomplexes with different compositions have been identified which probably have different functions.

Its subcellular location is the cellular thylakoid membrane. The catalysed reaction is a plastoquinone + NADH + (n+1) H(+)(in) = a plastoquinol + NAD(+) + n H(+)(out). It catalyses the reaction a plastoquinone + NADPH + (n+1) H(+)(in) = a plastoquinol + NADP(+) + n H(+)(out). In terms of biological role, NDH-1 shuttles electrons from an unknown electron donor, via FMN and iron-sulfur (Fe-S) centers, to quinones in the respiratory and/or the photosynthetic chain. The immediate electron acceptor for the enzyme in this species is believed to be plastoquinone. Couples the redox reaction to proton translocation, and thus conserves the redox energy in a proton gradient. Cyanobacterial NDH-1 also plays a role in inorganic carbon-concentration. The protein is NAD(P)H-quinone oxidoreductase subunit J of Nostoc sp. (strain PCC 7120 / SAG 25.82 / UTEX 2576).